Reading from the N-terminus, the 219-residue chain is Large ribosomal subunit protein uL3 (219 aa).

Gln-151 is subject to N5-methylglutamine.

It belongs to the universal ribosomal protein uL3 family. In terms of assembly, part of the 50S ribosomal subunit. Forms a cluster with proteins L14 and L19. Post-translationally, methylated by PrmB.

Its function is as follows. One of the primary rRNA binding proteins, it binds directly near the 3'-end of the 23S rRNA, where it nucleates assembly of the 50S subunit. In Blochmanniella floridana, this protein is Large ribosomal subunit protein uL3.